Consider the following 365-residue polypeptide: Methylthioribose-1-phosphate isomerase (365 aa).

Substrate is bound by residues R53–A55, R90, and Q201. The active-site Proton donor is the D242. A substrate-binding site is contributed by N252–K253.

Belongs to the eIF-2B alpha/beta/delta subunits family. MtnA subfamily.

The enzyme catalyses 5-(methylsulfanyl)-alpha-D-ribose 1-phosphate = 5-(methylsulfanyl)-D-ribulose 1-phosphate. It participates in amino-acid biosynthesis; L-methionine biosynthesis via salvage pathway; L-methionine from S-methyl-5-thio-alpha-D-ribose 1-phosphate: step 1/6. Catalyzes the interconversion of methylthioribose-1-phosphate (MTR-1-P) into methylthioribulose-1-phosphate (MTRu-1-P). The chain is Methylthioribose-1-phosphate isomerase from Methylorubrum populi (strain ATCC BAA-705 / NCIMB 13946 / BJ001) (Methylobacterium populi).